A 198-amino-acid polypeptide reads, in one-letter code: Orotate phosphoribosyltransferase (198 aa).

Residues Arg-108, Lys-109, Lys-112, His-114, and Glu-135–Ser-143 contribute to the 5-phospho-alpha-D-ribose 1-diphosphate site. Orotate contacts are provided by Thr-139 and Arg-167.

This sequence belongs to the purine/pyrimidine phosphoribosyltransferase family. PyrE subfamily. Homodimer. The cofactor is Mg(2+).

The catalysed reaction is orotidine 5'-phosphate + diphosphate = orotate + 5-phospho-alpha-D-ribose 1-diphosphate. Its pathway is pyrimidine metabolism; UMP biosynthesis via de novo pathway; UMP from orotate: step 1/2. In terms of biological role, catalyzes the transfer of a ribosyl phosphate group from 5-phosphoribose 1-diphosphate to orotate, leading to the formation of orotidine monophosphate (OMP). This chain is Orotate phosphoribosyltransferase, found in Synechocystis sp. (strain ATCC 27184 / PCC 6803 / Kazusa).